We begin with the raw amino-acid sequence, 420 residues long: COP9 signalosome complex subunit 5 (420 aa).

The 136-residue stretch at alanine 73 to threonine 208 folds into the MPN domain. Zn(2+)-binding residues include histidine 154, histidine 156, and aspartate 167. The short motif at histidine 154–aspartate 167 is the JAMM motif element.

The protein belongs to the peptidase M67A family. CSN5 subfamily. As to quaternary structure, component of the COP9 signalosome (CSN) complex.

It is found in the cytoplasm. The protein resides in the nucleus. Catalytic component of the COP9 signalosome (CSN) complex that acts as an regulator of the ubiquitin (Ubl) conjugation pathway by mediating the deneddylation of the cullin subunit of SCF-type E3 ubiquitin-protein ligase complexes. The CSN complex is involved in the regulation of the mating pheromone response. The polypeptide is COP9 signalosome complex subunit 5 (RRI1) (Eremothecium gossypii (strain ATCC 10895 / CBS 109.51 / FGSC 9923 / NRRL Y-1056) (Yeast)).